The chain runs to 400 residues: Spermatogenic leucine zipper protein 1 (400 aa).

Residues 1-27 (MADSDSSSEMPAHSPSPSPIPCAKQKP) are disordered. Ser-106 carries the phosphoserine modification. The interval 116 to 127 (RNKLRFKDDLFI) is helix-loop-helix motif. A basic motif region spans residues 128 to 193 (HFDPERENTM…HIRGEYRKLR (66 aa)). Coiled coils occupy residues 182 to 231 (SVHI…KDIV) and 268 to 293 (LIAALLENECQILQQRVDILRELHLH). Ser-207 is modified (phosphoserine). Positions 252-273 (LEEQVKKLSQDTHSLHLIAALL) are leucine-zipper. The interval 295–332 (AGPGHEKPLQTSGEQDKKCGEQDKKCGEQDKKCGEQDK) is disordered.

As to quaternary structure, interacts with PPP1CC isoform gamma-2. Post-translationally, phosphorylated by MAPK1/ERK2 and MAPK3/ERK1.

It localises to the cytoplasm. Its subcellular location is the nucleus. Functionally, transcription factor that binds to the DNA sequence 5'-CANNTG-3'(E box) and the G-box motif. May play an important role in the regulation of cell proliferation and differentiation during spermatogenesis. This chain is Spermatogenic leucine zipper protein 1 (Spz1), found in Rattus norvegicus (Rat).